A 75-amino-acid polypeptide reads, in one-letter code: Protein TM_1420 (75 aa).

C6, C11, C39, and C43 together coordinate [2Fe-2S] cluster.

The cofactor is [2Fe-2S] cluster.

Its function is as follows. Might be part of a multi-protein complex, possibly involved in metal cluster assembly. This is Protein TM_1420 from Thermotoga maritima (strain ATCC 43589 / DSM 3109 / JCM 10099 / NBRC 100826 / MSB8).